The sequence spans 1236 residues: DNA topoisomerase 2 (1236 aa).

ATP-binding positions include Asn65, Asn96, 124–126, 137–144, and 354–356; these read SSN, GRHGYGAK, and QSK. Positions 434-548 constitute a Toprim domain; that stretch reads RTLIITEGDS…KLLQNNPGYI (115 aa). Residues Glu440, Asp517, and Asp519 each contribute to the Mg(2+) site. The Topo IIA-type catalytic domain maps to 685–1101; that stretch reads IPHCVDGLKP…TPVKMWLTEL (417 aa). Tyr775 functions as the O-(5'-phospho-DNA)-tyrosine intermediate in the catalytic mechanism. The interval 956-965 is interaction with DNA; sequence ALAQRIYING. A disordered region spans residues 1161–1211; it reads YEKPPPSKRRPGESVGGARPSDSAARTVGKRLVGSRSEFKNKKPMSRKNNV.

The protein belongs to the type II topoisomerase family. As to quaternary structure, homodimer. Mg(2+) serves as cofactor. It depends on Mn(2+) as a cofactor. Requires Ca(2+) as cofactor.

The protein resides in the nucleus. The catalysed reaction is ATP-dependent breakage, passage and rejoining of double-stranded DNA.. Functionally, control of topological states of DNA by transient breakage and subsequent rejoining of DNA strands. Topoisomerase II makes double-strand breaks. The sequence is that of DNA topoisomerase 2 (TOP2) from Leishmania chagasi.